A 1024-amino-acid polypeptide reads, in one-letter code: Beta-galactosidase (1024 aa).

Asparagine 103 and aspartate 202 together coordinate substrate. Aspartate 202 is a Na(+) binding site. Mg(2+) is bound by residues glutamate 417, histidine 419, and glutamate 462. Substrate-binding positions include glutamate 462 and 538 to 541 (EYAH). The Proton donor role is filled by glutamate 462. Catalysis depends on glutamate 538, which acts as the Nucleophile. Residue asparagine 598 participates in Mg(2+) binding. The Na(+) site is built by phenylalanine 602 and asparagine 605. Residues asparagine 605 and tryptophan 1000 each contribute to the substrate site.

Belongs to the glycosyl hydrolase 2 family. In terms of assembly, homotetramer. Mg(2+) serves as cofactor. The cofactor is Na(+).

It carries out the reaction Hydrolysis of terminal non-reducing beta-D-galactose residues in beta-D-galactosides.. This chain is Beta-galactosidase, found in Escherichia coli (strain UTI89 / UPEC).